An 81-amino-acid chain; its full sequence is MNPIICAASVIGAGLAIGLGAIGPGIGQGTASGKAIEGLARQPEAEGKIRGTLLLSLAFMEALTIYGLVVALAIIFANPFV.

Helical transmembrane passes span Pro-3–Gly-23 and Leu-57–Ala-77.

The protein belongs to the ATPase C chain family. In terms of assembly, F-type ATPases have 2 components, F(1) - the catalytic core - and F(0) - the membrane proton channel. F(1) has five subunits: alpha(3), beta(3), gamma(1), delta(1), epsilon(1). F(0) has four main subunits: a(1), b(1), b'(1) and c(10-14). The alpha and beta chains form an alternating ring which encloses part of the gamma chain. F(1) is attached to F(0) by a central stalk formed by the gamma and epsilon chains, while a peripheral stalk is formed by the delta, b and b' chains.

The protein resides in the plastid. The protein localises to the chloroplast thylakoid membrane. F(1)F(0) ATP synthase produces ATP from ADP in the presence of a proton or sodium gradient. F-type ATPases consist of two structural domains, F(1) containing the extramembraneous catalytic core and F(0) containing the membrane proton channel, linked together by a central stalk and a peripheral stalk. During catalysis, ATP synthesis in the catalytic domain of F(1) is coupled via a rotary mechanism of the central stalk subunits to proton translocation. In terms of biological role, key component of the F(0) channel; it plays a direct role in translocation across the membrane. A homomeric c-ring of between 10-14 subunits forms the central stalk rotor element with the F(1) delta and epsilon subunits. The sequence is that of ATP synthase subunit c, chloroplastic from Euglena gracilis.